A 216-amino-acid polypeptide reads, in one-letter code: Large ribosomal subunit protein eL15 (216 aa).

This sequence belongs to the eukaryotic ribosomal protein eL15 family.

In Metallosphaera sedula (strain ATCC 51363 / DSM 5348 / JCM 9185 / NBRC 15509 / TH2), this protein is Large ribosomal subunit protein eL15.